A 926-amino-acid chain; its full sequence is Coatomer subunit beta'-2 (926 aa).

WD repeat units lie at residues 13–52 (QRSE…MAKS), 55–94 (VTEL…KVKV), 97–136 (AHSD…ACTQ), 140–180 (GHSH…PNFT), 183–224 (AHQK…CVQT), 227–266 (GHTH…LENT), 269–309 (YGLE…ASMD), 351–390 (TCDL…RSFG), and 461–501 (RIDV…SHFD). The tract at residues 847 to 926 (EEESLENGDM…GTNNEGNPSA (80 aa)) is disordered. The span at 868 to 887 (NEQRNEDDVAEHVEEHHEEK) shows a compositional bias: basic and acidic residues. The segment covering 888–900 (EAEEEEGIVDGDS) has biased composition (acidic residues). The segment covering 917–926 (GTNNEGNPSA) has biased composition (polar residues).

This sequence belongs to the WD repeat COPB2 family. In terms of assembly, oligomeric complex that consists of at least the alpha, beta, beta', gamma, delta, epsilon and zeta subunits.

It is found in the cytoplasm. Its subcellular location is the golgi apparatus membrane. The protein localises to the cytoplasmic vesicle. It localises to the COPI-coated vesicle membrane. The coatomer is a cytosolic protein complex that binds to dilysine motifs and reversibly associates with Golgi non-clathrin-coated vesicles, which further mediate biosynthetic protein transport from the ER, via the Golgi up to the trans Golgi network. Coatomer complex is required for budding from Golgi membranes, and is essential for the retrograde Golgi-to-ER transport of dilysine-tagged proteins. The sequence is that of Coatomer subunit beta'-2 from Arabidopsis thaliana (Mouse-ear cress).